Consider the following 315-residue polypeptide: Putative methyltransferase SPBC8D2.16c (315 aa).

This sequence belongs to the class IV-like SAM-binding methyltransferase superfamily.

It localises to the cytoplasm. The protein resides in the nucleus. This is Putative methyltransferase SPBC8D2.16c from Schizosaccharomyces pombe (strain 972 / ATCC 24843) (Fission yeast).